Here is a 445-residue protein sequence, read N- to C-terminus: Glutamate--tRNA ligase 2 (445 aa).

Positions 10-20 (PSPTGMLHVGN) match the 'HIGH' region motif. A 'KMSKS' region motif is present at residues 240–244 (KISKR). Position 243 (lysine 243) interacts with ATP.

The protein belongs to the class-I aminoacyl-tRNA synthetase family. Glutamate--tRNA ligase type 1 subfamily. Monomer.

Its subcellular location is the cytoplasm. It catalyses the reaction tRNA(Glu) + L-glutamate + ATP = L-glutamyl-tRNA(Glu) + AMP + diphosphate. Its function is as follows. Catalyzes the attachment of glutamate to tRNA(Glu) in a two-step reaction: glutamate is first activated by ATP to form Glu-AMP and then transferred to the acceptor end of tRNA(Glu). In Rickettsia canadensis (strain McKiel), this protein is Glutamate--tRNA ligase 2.